A 384-amino-acid chain; its full sequence is Succinyl-diaminopimelate desuccinylase (384 aa).

A Zn(2+)-binding site is contributed by histidine 75. Residue aspartate 77 is part of the active site. Aspartate 108 provides a ligand contact to Zn(2+). Glutamate 142 serves as the catalytic Proton acceptor. Residues glutamate 143, glutamate 171, and histidine 357 each contribute to the Zn(2+) site.

This sequence belongs to the peptidase M20A family. DapE subfamily. As to quaternary structure, homodimer. It depends on Zn(2+) as a cofactor. Requires Co(2+) as cofactor.

It catalyses the reaction N-succinyl-(2S,6S)-2,6-diaminopimelate + H2O = (2S,6S)-2,6-diaminopimelate + succinate. Its pathway is amino-acid biosynthesis; L-lysine biosynthesis via DAP pathway; LL-2,6-diaminopimelate from (S)-tetrahydrodipicolinate (succinylase route): step 3/3. Functionally, catalyzes the hydrolysis of N-succinyl-L,L-diaminopimelic acid (SDAP), forming succinate and LL-2,6-diaminopimelate (DAP), an intermediate involved in the bacterial biosynthesis of lysine and meso-diaminopimelic acid, an essential component of bacterial cell walls. This is Succinyl-diaminopimelate desuccinylase from Shewanella oneidensis (strain ATCC 700550 / JCM 31522 / CIP 106686 / LMG 19005 / NCIMB 14063 / MR-1).